The chain runs to 127 residues: Large ribosomal subunit protein bL17 (127 aa).

The protein belongs to the bacterial ribosomal protein bL17 family. In terms of assembly, part of the 50S ribosomal subunit. Contacts protein L32.

In Xanthomonas oryzae pv. oryzae (strain KACC10331 / KXO85), this protein is Large ribosomal subunit protein bL17.